The primary structure comprises 258 residues: Phosphate import ATP-binding protein PstB 1 (258 aa).

An ABC transporter domain is found at 5-247; that stretch reads LDLTDVNIYY…EKIFSNPNQK (243 aa). An ATP-binding site is contributed by 37–44; that stretch reads GPSGCGKT.

This sequence belongs to the ABC transporter superfamily. Phosphate importer (TC 3.A.1.7) family. In terms of assembly, the complex is composed of two ATP-binding proteins (PstB), two transmembrane proteins (PstC and PstA) and a solute-binding protein (PstS).

The protein resides in the cell membrane. It catalyses the reaction phosphate(out) + ATP + H2O = ADP + 2 phosphate(in) + H(+). In terms of biological role, part of the ABC transporter complex PstSACB involved in phosphate import. Responsible for energy coupling to the transport system. The chain is Phosphate import ATP-binding protein PstB 1 from Mycobacterium tuberculosis (strain CDC 1551 / Oshkosh).